Here is a 220-residue protein sequence, read N- to C-terminus: Inner membrane protein YqjA (220 aa).

Residues 1-27 (MELLTQLLQALWAQDFETLANPSMIGM) lie on the Periplasmic side of the membrane. Residues 28-48 (LYFVLFVILFLENGLLPAAFL) traverse the membrane as a helical segment. At 49–52 (PGDS) the chain is on the cytoplasmic side. The next 2 membrane-spanning stretches (helical) occupy residues 53 to 73 (LLVL…QTIL) and 74 to 94 (LLTV…RWLG). Residues 95–154 (NTRTVQNWLSHLPAHYHQRAHHLFHKHGLSALLIGRFIAFVRTLLPTIAGLSGLNNARFQ) lie on the Cytoplasmic side of the membrane. Residues 155–175 (FFNWMSGLLWVLILTTLGYML) traverse the membrane as a helical segment. Over 176 to 191 (GKTPVFLKYEDQLMSC) the chain is Periplasmic. The helical transmembrane segment at 192–212 (LMLLPVVLLVFGLAGSLVVLW) threads the bilayer. The Cytoplasmic segment spans residues 213-220 (KKKYGNRG).

It belongs to the DedA family.

The protein resides in the cell inner membrane. Its function is as follows. May be a membrane transporter required for proton motive force (PMF)-dependent drug efflux. Required, with YghB, for the proper export of certain periplasmic amidases and, possibly, other Tat substrates. May play a role in determining membrane lipid composition. This chain is Inner membrane protein YqjA (yqjA), found in Escherichia coli (strain K12).